The primary structure comprises 276 residues: Putative metal-binding protein TC_0696 (276 aa).

The signal sequence occupies residues 1–18 (MRLLILLLFSFGIIYSHG). A divalent metal cation is bound by residues His-59, His-121, His-185, and Asp-256.

This sequence belongs to the bacterial solute-binding protein 9 family.

Its subcellular location is the periplasm. In terms of biological role, part of an ATP-binding cassette (ABC) transport system involved in metal import. Binds a metal with high affinity and specificity and delivers it to the membrane permease for translocation into the cytoplasm. The chain is Putative metal-binding protein TC_0696 from Chlamydia muridarum (strain MoPn / Nigg).